A 407-amino-acid polypeptide reads, in one-letter code: Phosphopentomutase (407 aa).

Asp10, Asp306, His311, Asp347, His348, and His359 together coordinate Mn(2+).

This sequence belongs to the phosphopentomutase family. Mn(2+) serves as cofactor.

The protein resides in the cytoplasm. The catalysed reaction is 2-deoxy-alpha-D-ribose 1-phosphate = 2-deoxy-D-ribose 5-phosphate. It carries out the reaction alpha-D-ribose 1-phosphate = D-ribose 5-phosphate. The protein operates within carbohydrate degradation; 2-deoxy-D-ribose 1-phosphate degradation; D-glyceraldehyde 3-phosphate and acetaldehyde from 2-deoxy-alpha-D-ribose 1-phosphate: step 1/2. Its function is as follows. Isomerase that catalyzes the conversion of deoxy-ribose 1-phosphate (dRib-1-P) and ribose 1-phosphate (Rib-1-P) to deoxy-ribose 5-phosphate (dRib-5-P) and ribose 5-phosphate (Rib-5-P), respectively. This Yersinia pestis bv. Antiqua (strain Angola) protein is Phosphopentomutase.